Consider the following 218-residue polypeptide: Peptide methionine sulfoxide reductase MsrA (218 aa).

The active site involves Cys54.

It belongs to the MsrA Met sulfoxide reductase family.

The catalysed reaction is L-methionyl-[protein] + [thioredoxin]-disulfide + H2O = L-methionyl-(S)-S-oxide-[protein] + [thioredoxin]-dithiol. The enzyme catalyses [thioredoxin]-disulfide + L-methionine + H2O = L-methionine (S)-S-oxide + [thioredoxin]-dithiol. Has an important function as a repair enzyme for proteins that have been inactivated by oxidation. Catalyzes the reversible oxidation-reduction of methionine sulfoxide in proteins to methionine. This Azorhizobium caulinodans (strain ATCC 43989 / DSM 5975 / JCM 20966 / LMG 6465 / NBRC 14845 / NCIMB 13405 / ORS 571) protein is Peptide methionine sulfoxide reductase MsrA.